The chain runs to 926 residues: Storkhead-box protein 2 (926 aa).

Disordered regions lie at residues 1 to 32, 338 to 393, 452 to 529, 564 to 586, 633 to 693, 723 to 802, and 823 to 926; these read MKKTRSTTLRRAWPSSDFSDRASDRMRSRSEK, EEEK…DIPG, EMPF…SYID, KEPSSACSLLEPGKTPESMPSYG, VKKL…SLDK, LLKS…VGTM, and TLLT…VTSV. Basic and acidic residues predominate over residues 18–32; it reads FSDRASDRMRSRSEK. Basic residues predominate over residues 353–378; that stretch reads HSGRSKKSRTHRKSHGKSRSHSKTRV. Positions 379–393 are enriched in basic and acidic residues; sequence SKGDPSDGSHLDIPG. Over residues 463-472 the composition is skewed to basic residues; sequence SHSKVHRSHS. The segment covering 473 to 495 has biased composition (basic and acidic residues); it reads HTQDRRSRNERSNKAKERSRSMD. Positions 518 to 529 are enriched in polar residues; it reads QDDQTPSQSYID. Composition is skewed to basic and acidic residues over residues 633 to 658 and 684 to 693; these read VKKLSPSERQTPHSSREPVGHKEESP and HSAEPSSLDK. The span at 746–769 shows a compositional bias: polar residues; sequence LGTSAAQAMPPSQRQQEPGGNQEA. The segment covering 785 to 799 has biased composition (basic and acidic residues); the sequence is GANKNAEEEKNRDDV. Polar residues-rich tracts occupy residues 847–884 and 914–926; these read MDSSSITVDSGFNSPRTRESLASNTSSIVESNRRQNPA and KPSNCLQASVTSV.

This is Storkhead-box protein 2 (Stox2) from Mus musculus (Mouse).